We begin with the raw amino-acid sequence, 1320 residues long: Collagen alpha-1(XX) chain (1320 aa).

The N-terminal stretch at 1 to 25 (MSLQGSYQHFCLWMFLGTTLALGQG) is a signal peptide. Positions 27-118 (VSSRLRLAVL…EFVIEDLKSQ (92 aa)) constitute a Fibronectin type-III 1 domain. One can recognise a VWFA domain in the interval 177-352 (DIIFLVDGSW…DTLAPLLSRL (176 aa)). 5 consecutive Fibronectin type-III domains span residues 377–466 (TPTR…APLP), 467–556 (PPGP…SALG), 557–644 (PPRH…TQKA), 646–735 (SPGQ…TPSA), and 740–831 (PPSS…ACPA). N-linked (GlcNAc...) asparagine glycosylation is present at N433. N-linked (GlcNAc...) asparagine glycosylation is found at N569 and N604. Residues 728 to 752 (SLRYTPSAASRSPPSSLALSSETPN) form a disordered region. Over residues 733-748 (PSAASRSPPSSLALSS) the composition is skewed to low complexity. A glycan (N-linked (GlcNAc...) asparagine) is linked at N771. In terms of domain architecture, Laminin G-like spans 840 to 1035 (GFDLMVAFGL…LQMLQIVCSD (196 aa)). Disordered stretches follow at residues 1064–1220 (YSSE…EKGE) and 1291–1320 (LRPE…ESLE). Residues 1069-1080 (PGPPGPQGPPGL) show a composition bias toward pro residues. 3 Collagen-like domains span residues 1069-1122 (PGPP…TQGR), 1125-1174 (QGPM…GPAG), and 1165-1221 (GMRG…KGEP). Residues 1081–1093 (PGRNGPPGQQGHP) are compositionally biased toward low complexity. Positions 1106 to 1115 (GPEGPGGQQG) are enriched in gly residues. Residues 1140–1152 (QGLSGLQGLSGQQ) are compositionally biased toward low complexity. Over residues 1302–1320 (ISHTSNPRLQEVQTPESLE) the composition is skewed to polar residues.

It is found in the secreted. The protein localises to the extracellular space. Functionally, probable collagen protein. The polypeptide is Collagen alpha-1(XX) chain (Col20a1) (Mus musculus (Mouse)).